Here is a 129-residue protein sequence, read N- to C-terminus: Small ribosomal subunit protein uS12 (129 aa).

The interval 1-25 is disordered; it reads MPTYNQLVRFGRKSKTRKTKSPALE. Residues 10 to 20 are compositionally biased toward basic residues; sequence FGRKSKTRKTK. Residue aspartate 89 is modified to 3-methylthioaspartic acid. Residues 109 to 129 are disordered; the sequence is GRKQGRSRYGTPRKQVAVTKK.

This sequence belongs to the universal ribosomal protein uS12 family. In terms of assembly, part of the 30S ribosomal subunit. Contacts proteins S8 and S17. May interact with IF1 in the 30S initiation complex.

With S4 and S5 plays an important role in translational accuracy. In terms of biological role, interacts with and stabilizes bases of the 16S rRNA that are involved in tRNA selection in the A site and with the mRNA backbone. Located at the interface of the 30S and 50S subunits, it traverses the body of the 30S subunit contacting proteins on the other side and probably holding the rRNA structure together. The combined cluster of proteins S8, S12 and S17 appears to hold together the shoulder and platform of the 30S subunit. The chain is Small ribosomal subunit protein uS12 from Rickettsia peacockii (strain Rustic).